The following is a 334-amino-acid chain: GTPase Obg (334 aa).

Residues 1 to 159 (MKFIDQAIIH…RDIQLELMLL (159 aa)) form the Obg domain. A disordered region spans residues 67–86 (AQNGQNGSSRKSSGKKGDDI). Over residues 68 to 77 (QNGQNGSSRK) the composition is skewed to low complexity. The 174-residue stretch at 160–333 (ADVGTLGMPN…LCSDITKYLK (174 aa)) folds into the OBG-type G domain. Residues 166–173 (GMPNVGKS), 191–195 (FTTLH), 213–216 (DIPG), 283–286 (NKID), and 314–316 (SSM) each bind GTP. Residues Ser173 and Thr193 each contribute to the Mg(2+) site.

This sequence belongs to the TRAFAC class OBG-HflX-like GTPase superfamily. OBG GTPase family. In terms of assembly, monomer. The cofactor is Mg(2+).

The protein localises to the cytoplasm. Its function is as follows. An essential GTPase which binds GTP, GDP and possibly (p)ppGpp with moderate affinity, with high nucleotide exchange rates and a fairly low GTP hydrolysis rate. Plays a role in control of the cell cycle, stress response, ribosome biogenesis and in those bacteria that undergo differentiation, in morphogenesis control. In Buchnera aphidicola subsp. Acyrthosiphon pisum (strain 5A), this protein is GTPase Obg.